Reading from the N-terminus, the 186-residue chain is Elongation factor P (186 aa).

The protein belongs to the elongation factor P family.

The protein localises to the cytoplasm. It participates in protein biosynthesis; polypeptide chain elongation. In terms of biological role, involved in peptide bond synthesis. Stimulates efficient translation and peptide-bond synthesis on native or reconstituted 70S ribosomes in vitro. Probably functions indirectly by altering the affinity of the ribosome for aminoacyl-tRNA, thus increasing their reactivity as acceptors for peptidyl transferase. This chain is Elongation factor P, found in Mycoplasmopsis synoviae (strain 53) (Mycoplasma synoviae).